A 1025-amino-acid polypeptide reads, in one-letter code: Multidrug resistance protein MdtC (1025 aa).

12 helical membrane-spanning segments follow: residues F3 to L23, E333 to L353, I360 to C380, L387 to L407, V431 to L451, V469 to M489, L528 to P548, V853 to S873, V875 to L895, L897 to V917, P953 to G973, and I984 to V1004.

Belongs to the resistance-nodulation-cell division (RND) (TC 2.A.6) family. MdtC subfamily. Part of a tripartite efflux system composed of MdtA, MdtB and MdtC. MdtC forms a heteromultimer with MdtB.

The protein resides in the cell inner membrane. Functionally, the MdtABC tripartite complex confers resistance against novobiocin and deoxycholate. The protein is Multidrug resistance protein MdtC of Escherichia coli O9:H4 (strain HS).